A 349-amino-acid chain; its full sequence is 5-deoxyribose 1-phosphate isomerase (349 aa).

Substrate contacts are provided by residues 49-51, R92, and Q199; that span reads RGA. D240 (proton donor) is an active-site residue. Position 250–251 (250–251) interacts with substrate; sequence NK.

Belongs to the EIF-2B alpha/beta/delta subunits family. DrdI subfamily.

The catalysed reaction is 5-deoxy-alpha-D-ribose 1-phosphate = 5-deoxy-D-ribulose 1-phosphate. It participates in carbohydrate degradation. In terms of biological role, catalyzes the isomerization of 5-deoxy-alpha-D-ribose 1-phosphate to 5-deoxy-D-ribulose 1-phosphate, as part of a 5-deoxyribose salvage pathway that recycles this toxic radical SAM enzyme by-product to mainstream metabolites. The protein is 5-deoxyribose 1-phosphate isomerase of Clostridium botulinum (strain ATCC 19397 / Type A).